The following is a 335-amino-acid chain: N-acetyl-gamma-glutamyl-phosphate reductase (335 aa).

C156 is an active-site residue.

Belongs to the NAGSA dehydrogenase family. Type 1 subfamily.

It localises to the cytoplasm. It catalyses the reaction N-acetyl-L-glutamate 5-semialdehyde + phosphate + NADP(+) = N-acetyl-L-glutamyl 5-phosphate + NADPH + H(+). Its pathway is amino-acid biosynthesis; L-arginine biosynthesis; N(2)-acetyl-L-ornithine from L-glutamate: step 3/4. Functionally, catalyzes the NADPH-dependent reduction of N-acetyl-5-glutamyl phosphate to yield N-acetyl-L-glutamate 5-semialdehyde. This chain is N-acetyl-gamma-glutamyl-phosphate reductase, found in Tolumonas auensis (strain DSM 9187 / NBRC 110442 / TA 4).